A 229-amino-acid polypeptide reads, in one-letter code: Germin-like protein subfamily 1 member 7 (229 aa).

An N-terminal signal peptide occupies residues 1–24 (MEGFLRFLVAKAILLALASSFVSC). The cysteines at positions 34 and 50 are disulfide-linked. Positions 64 to 215 (SGLNIAGNTI…AFQLDVNVVK (152 aa)) constitute a Cupin type-1 domain. Asparagine 79 carries an N-linked (GlcNAc...) asparagine glycan. Mn(2+) is bound by residues histidine 112, histidine 114, glutamate 119, and histidine 161.

This sequence belongs to the germin family. Oligomer (believed to be a pentamer but probably hexamer).

The protein localises to the secreted. The protein resides in the extracellular space. Its subcellular location is the apoplast. Functionally, may play a role in plant defense. Probably has no oxalate oxidase activity even if the active site is conserved. This Arabidopsis thaliana (Mouse-ear cress) protein is Germin-like protein subfamily 1 member 7.